We begin with the raw amino-acid sequence, 171 residues long: 3-hydroxydecanoyl-[acyl-carrier-protein] dehydratase (171 aa).

The active site involves histidine 70.

The protein belongs to the thioester dehydratase family. FabA subfamily. In terms of assembly, homodimer.

The protein resides in the cytoplasm. The enzyme catalyses a (3R)-hydroxyacyl-[ACP] = a (2E)-enoyl-[ACP] + H2O. It catalyses the reaction (3R)-hydroxydecanoyl-[ACP] = (2E)-decenoyl-[ACP] + H2O. The catalysed reaction is (2E)-decenoyl-[ACP] = (3Z)-decenoyl-[ACP]. It functions in the pathway lipid metabolism; fatty acid biosynthesis. In terms of biological role, necessary for the introduction of cis unsaturation into fatty acids. Catalyzes the dehydration of (3R)-3-hydroxydecanoyl-ACP to E-(2)-decenoyl-ACP and then its isomerization to Z-(3)-decenoyl-ACP. Can catalyze the dehydratase reaction for beta-hydroxyacyl-ACPs with saturated chain lengths up to 16:0, being most active on intermediate chain length. The sequence is that of 3-hydroxydecanoyl-[acyl-carrier-protein] dehydratase from Shewanella loihica (strain ATCC BAA-1088 / PV-4).